Reading from the N-terminus, the 387-residue chain is MTRSVWLKADDEVGDWETRKRRITAGLEAGVDWVLVDRADVARVRELGSVNVAAFSTDDANVIEDAEGTDADPDAYVAGKDGEGDGTVDLPADFSGSADLSALRRGHADTAYVRIRDEEYEPFAQAAAEVADHTIVVGDDWTIIPLENLIARIGEETTLVAGVESAAEAETAFETLDIGADAVLLDSDDPDEIRRTVSVRDAADREHLALSTATITTIEEAGSADRVCVDTGSLLADDEGMLVGSMSRGLFFVHAETAQSPYVAARPFRVNAGAVHAYVRTPDGGTKYLAELGSGDEVQVVDGDGRTRSAVVGRAKIEKRPMFRVEAETDDGDRIETLLQNAETIKVATPNGRTAVTDLSVGDDLHVFLQDGGRHFGEAIDERIIEQ.

Belongs to the archaeal-type DHQ synthase family.

The enzyme catalyses 2-amino-2,3,7-trideoxy-D-lyxo-hept-6-ulosonate + NAD(+) + H2O = 3-dehydroquinate + NH4(+) + NADH + H(+). In terms of biological role, catalyzes the oxidative deamination and cyclization of 2-amino-3,7-dideoxy-D-threo-hept-6-ulosonic acid (ADH) to yield 3-dehydroquinate (DHQ), which is fed into the canonical shikimic pathway of aromatic amino acid biosynthesis. The protein is 3-dehydroquinate synthase of Halobacterium salinarum (strain ATCC 29341 / DSM 671 / R1).